A 141-amino-acid chain; its full sequence is Large ribosomal subunit protein uL11 (141 aa).

Belongs to the universal ribosomal protein uL11 family. As to quaternary structure, part of the ribosomal stalk of the 50S ribosomal subunit. Interacts with L10 and the large rRNA to form the base of the stalk. L10 forms an elongated spine to which L12 dimers bind in a sequential fashion forming a multimeric L10(L12)X complex. Post-translationally, one or more lysine residues are methylated.

Forms part of the ribosomal stalk which helps the ribosome interact with GTP-bound translation factors. This is Large ribosomal subunit protein uL11 from Chlorobaculum tepidum (strain ATCC 49652 / DSM 12025 / NBRC 103806 / TLS) (Chlorobium tepidum).